Here is a 461-residue protein sequence, read N- to C-terminus: MSILEWFWNILCGMAQYLTFSKNLTNDNLVNIYVKSNVGGTISVNLDPKSDIKNVKELVAPKLGLEPDDVKIIFAGKELLDSTVIEVLDFFSDILHAVKVNKKIKNVIPDKPLCETLEELHQLNDQKNVESIEESNLKNEGKNKAHFFIYCANPCKKINTGKLRVCCSECKHGAFTVDTDPQSWADVLDKNKITGVCNNVGCEGLYAKFYFKCASHPSQGENDTAVPLNLIKRNHKKIPCLACTDICDPVLVFSCDNRHVTCLECFKNYCGSRLKDRQFLSHPDFGYTLPCPAGCSNSFIEEVHHFRLLTDAQYEQYHRFATEEFILQAGGVLCPQPGCGQGILIDQNCNRVQCSCGYVFCGKCLEGFHLGECLNPTDVPFLSQNCDYPLDPEKLEKARWDEASSTVIKVLTKPCPKCRTSTERAGGCMHMICTRANCGFHWCWVCQGPWERDCMASHWFG.

Positions 30–90 (VNIYVKSNVG…DSTVIEVLDF (61 aa)) constitute a Ubiquitin-like domain. Position 92 is a phosphoserine (S92). An RING-type 0; atypical zinc finger spans residues 145–227 (AHFFIYCANP…SQGENDTAVP (83 aa)). Residues C151, C155, C167, and C170 each coordinate Zn(2+). T176 is modified (phosphothreonine). Zn(2+)-binding residues include C197, C202, C213, H216, C240, C243, C255, H259, C262, C265, C291, C295, C334, C339, C354, C356, C361, C364, H369, C373, C415, and C418. The TRIAD supradomain stretch occupies residues 236–461 (KKIPCLACTD…RDCMASHWFG (226 aa)). Residues 240-295 (CLACTDICDPVLVFSCDNRHVTCLECFKNYCGSRLKDRQFLSHPDFGYTLPCPAGC) form an RING-type 1 zinc finger. 2 consecutive IBR-type zinc fingers follow at residues 315–373 (EQYH…LGEC) and 411–452 (LTKP…PWER). The RING-type 2; atypical zinc finger occupies 415–446 (CPKCRTSTERAGGCMHMICTRANCGFHWCWVC). C428 is an active-site residue. The Zn(2+) site is built by C433, C438, C443, C446, C454, and H458.

It belongs to the RBR family. Parkin subfamily. As to quaternary structure, forms an E3 ubiquitin ligase complex with E2 ubiquitin-conjugating enzymes. Post-translationally, auto-ubiquitinates in an E2-dependent manner leading to its own degradation. In terms of processing, phosphorylated. Activation requires phosphorylation at Ser-92 by Pink1 and binding to Pink1-phosphorylated polyubiquitin chains. Phosphorylation at Thr-176 by Pink1 is also important for mitochondrial localization.

Its subcellular location is the mitochondrion. It localises to the cytoplasm. It is found in the cytosol. It carries out the reaction [E2 ubiquitin-conjugating enzyme]-S-ubiquitinyl-L-cysteine + [acceptor protein]-L-lysine = [E2 ubiquitin-conjugating enzyme]-L-cysteine + [acceptor protein]-N(6)-ubiquitinyl-L-lysine.. It participates in protein modification; protein ubiquitination. With respect to regulation, in the autoinhibited state the side chain of Phe-460 inserts into a hydrophobic groove in RING-0, occluding the ubiquitin acceptor site Cys-428, whereas the REP repressor element binds RING-1 and blocks its E2-binding site. Activation of park requires 2 steps: (1) phosphorylation at Ser-92 by Pink1 and (2) binding to phosphorylated ubiquitin, leading to unlock repression of the catalytic Cys-428 by the RING-0 region via an allosteric mechanism and converting park to its fully-active form. According to another report, phosphorylation at Ser-92 by Pink1 is not essential for activation and only binding to phosphorylated ubiquitin is essential to unlock repression. Its function is as follows. E3 ubiquitin-protein ligase which accepts ubiquitin from E2 ubiquitin-conjugating enzymes in the form of a thioester and then directly transfers the ubiquitin to targeted substrates, such as Marf, Opa1, Sep1, Tom20 and porin. Mediates monoubiquitination as well as 'Lys-6', 'Lys-11', 'Lys-48'-linked and 'Lys-63'-linked polyubiquitination of substrates, depending on the context. Protects against mitochondrial dysfunction during cellular stress, by acting downstream of Pink1, to coordinate mitochondrial quality control mechanisms that remove and replace dysfunctional mitochondrial components. Depending on the severity of mitochondrial damage and/or dysfunction, activity ranges from preventing apoptosis and stimulating mitochondrial biogenesis to regulating mitochondrial dynamics and eliminating severely damaged mitochondria via mitophagy. Appears to be particularly important in maintaining the physiology and function of cells with high energy demands that are undergoing stress or altered metabolic environment, including spermatids, muscle cells and neurons such as the dopaminergic (DA) neurons. Activation and recruitment onto the outer membrane of damaged/dysfunctional mitochondria (OMM) requires Pink1-mediated phosphorylation of both park and ubiquitin. In depolarized mitochondria, mediates the decision between mitophagy or preventing apoptosis by inducing either the poly- or monoubiquitination of porin/VDAC; polyubiquitination of porin promotes mitophagy, while monoubiquitination of porin decreases mitochondrial calcium influx which ultimately inhibits apoptosis. When cellular stress results in irreversible mitochondrial damage, promotes the autophagic degradation of dysfunctional depolarized mitochondria (mitophagy) by promoting the ubiquitination of mitochondrial proteins. Preferentially assembles 'Lys-6'-, 'Lys-11'- and 'Lys-63'-linked polyubiquitin chains following mitochondrial damage, leading to mitophagy. In developing tissues, inhibits JNK-mediated apoptosis by negatively regulating bsk transcription. The Pink1-park pathway also promotes fission and/or inhibits fusion of damaged mitochondria by mediating the ubiquitination and subsequent degradation of proteins involved in mitochondrial fusion/fission such as Marf and Opa1. This prevents the refusion of unhealthy mitochondria with the healthy mitochondrial network and/or initiates mitochondrial fragmentation facilitating their later engulfment by autophagosomes. Regulates motility of damaged mitochondria by phosphorylating Miro which likely promotes its park-dependent degradation by the proteasome; in motor neurons, this inhibits mitochondrial intracellular anterograde transport along the axons which probably increases the chance of the mitochondria being eliminated in the soma. The Pink1-park pathway is also involved in mitochondrial regeneration processes such as promoting mitochondrial biogenesis, activating localized mitochondrial repair, promoting selective turnover of mitochondrial proteins and initiating the mitochondrial import of endogenous proteins. Involved in mitochondrial biogenesis via the ubiquitination of transcriptional repressor Paris which leads to its subsequent proteasomal degradation and allows activation of the transcription factor srl. Promotes localized mitochondrial repair by activating the translation of specific nuclear-encoded mitochondrial RNAs (nc-mtRNAs) on the mitochondrial surface, including several key electron transport chain component nc-mtRNAs. This Pediculus humanus subsp. corporis (Body louse) protein is E3 ubiquitin-protein ligase parkin.